The chain runs to 573 residues: Sulfate adenylyltransferase (573 aa).

An N-terminal region spans residues 1-169 (MANSPHGGVL…LEAVNRLQHY (169 aa)). The segment at 170–394 (DFVELRYTPS…LRESHPPRSQ (225 aa)) is catalytic. Gln197 contacts sulfate. Residues 197 to 200 (QTRN) and 291 to 294 (GRDH) contribute to the ATP site. Active-site residues include Thr198, Arg199, and Asn200. Arg199 is a sulfate binding site. A sulfate-binding site is contributed by Ala295. Met333 is a binding site for ATP. Residues 395–573 (QGFTIFLTGY…LESQGLLDRF (179 aa)) form an allosteric regulation domain; adenylyl-sulfate kinase-like region. 3'-phosphoadenylyl sulfate contacts are provided by residues 434 to 437 (ETVR), Arg451, 477 to 478 (IA), and Arg515.

The protein in the N-terminal section; belongs to the sulfate adenylyltransferase family. In the C-terminal section; belongs to the APS kinase family. As to quaternary structure, homohexamer. Dimer of trimers.

It localises to the cytoplasm. It catalyses the reaction sulfate + ATP + H(+) = adenosine 5'-phosphosulfate + diphosphate. It functions in the pathway sulfur metabolism; hydrogen sulfide biosynthesis; sulfite from sulfate: step 1/3. Allosterically inhibited by 3'-phosphoadenosine 5'-phosphosulfate (PAPS). Functionally, catalyzes the first intracellular reaction of sulfate assimilation, forming adenosine-5'-phosphosulfate (APS) from inorganic sulfate and ATP. Plays an important role in sulfate activation as a component of the biosynthesis pathway of sulfur-containing amino acids. The sequence is that of Sulfate adenylyltransferase from Chaetomium globosum (strain ATCC 6205 / CBS 148.51 / DSM 1962 / NBRC 6347 / NRRL 1970) (Soil fungus).